Consider the following 358-residue polypeptide: Small ribosomal subunit biogenesis GTPase RsgA 2 (358 aa).

Positions 106-261 (AEQLIAANVD…LIDTPGMREI (156 aa)) constitute a CP-type G domain. GTP is bound by residues 151–154 (SKAD) and 203–211 (GSSGVGKST). Positions 284, 289, 291, and 297 each coordinate Zn(2+).

The protein belongs to the TRAFAC class YlqF/YawG GTPase family. RsgA subfamily. As to quaternary structure, monomer. Associates with 30S ribosomal subunit, binds 16S rRNA. Zn(2+) serves as cofactor.

It is found in the cytoplasm. Its function is as follows. One of several proteins that assist in the late maturation steps of the functional core of the 30S ribosomal subunit. Helps release RbfA from mature subunits. May play a role in the assembly of ribosomal proteins into the subunit. Circularly permuted GTPase that catalyzes slow GTP hydrolysis, GTPase activity is stimulated by the 30S ribosomal subunit. This chain is Small ribosomal subunit biogenesis GTPase RsgA 2, found in Vibrio parahaemolyticus serotype O3:K6 (strain RIMD 2210633).